Reading from the N-terminus, the 184-residue chain is Inner membrane-spanning protein YciB (184 aa).

Transmembrane regions (helical) follow at residues 19 to 39, 52 to 72, 76 to 96, 123 to 143, and 151 to 171; these read LVGI…QLLI, LFMG…NQLE, WKVT…QYGF, LGWA…SQYL, and FKTF…GIYI.

It belongs to the YciB family.

The protein resides in the cell inner membrane. In terms of biological role, plays a role in cell envelope biogenesis, maintenance of cell envelope integrity and membrane homeostasis. The chain is Inner membrane-spanning protein YciB from Pasteurella multocida (strain Pm70).